The primary structure comprises 187 residues: Ponticulin-like protein K (187 aa).

Positions 1–19 are cleaved as a signal peptide; sequence MKNLILLFLLISIINLIQS. Residues Asn-31, Asn-70, Asn-86, Asn-93, Asn-119, Asn-128, Asn-146, Asn-160, and Asn-161 are each glycosylated (N-linked (GlcNAc...) asparagine). Over residues 115 to 146 the composition is skewed to low complexity; the sequence is PSPSNSSNPSPSPNTTSSSSLSSSSLNSNEPN. The segment at 115 to 161 is disordered; the sequence is PSPSNSSNPSPSPNTTSSSSLSSSSLNSNEPNQTTKPPKTNEPQKNN. Polar residues predominate over residues 147–161; the sequence is QTTKPPKTNEPQKNN. A lipid anchor (GPI-like-anchor amidated asparagine) is attached at Asn-161. The propeptide at 162–187 is removed in mature form; it reads STSNIPNFFAIFGFLVLIIFILGDKI.

It belongs to the ponticulin family. Post-translationally, the GPI-like-anchor contains a phosphoceramide group, rather than a phosphatidyl group.

It is found in the cell membrane. In terms of biological role, binds F-actin and nucleates actin assembly. This Dictyostelium discoideum (Social amoeba) protein is Ponticulin-like protein K (ponK).